Consider the following 134-residue polypeptide: Early E3B 14.5 kDa protein (134 aa).

The signal sequence occupies residues 1–21 (MQAMLPVILILLLPCIPLAST). Residues 54 to 78 (YWIVIVGIINILSCTFFSITIYPTF) form a helical membrane-spanning segment.

The protein belongs to the adenoviridae E3_14 family. Phosphorylated on serine; O-glycosylated, but not N-glycosylated.

The protein localises to the host membrane. Its function is as follows. Down-regulates the EGF receptor and prevents cytolysis by TNF. The polypeptide is Early E3B 14.5 kDa protein (Homo sapiens (Human)).